The following is a 160-amino-acid chain: Lymphocyte antigen 96 (160 aa).

Residues 1–16 form the signal peptide; the sequence is MFPFMLFSTLFSSIFT. 3 cysteine pairs are disulfide-bonded: C25–C51, C37–C148, and C95–C105. N-linked (GlcNAc...) asparagine glycosylation occurs at N26. The N-linked (GlcNAc...) asparagine glycan is linked to N114. The segment at 119–123 is interaction with lipopolysaccharide; that stretch reads FSFQG. A glycan (N-linked (GlcNAc...) asparagine) is linked at N150.

As to quaternary structure, heterogeneous homomer formed from homodimers; disulfide-linked. Belongs to the lipopolysaccharide (LPS) receptor, a multi-protein complex containing at least CD14, LY96 and TLR4. Binds to the extracellular domains of TLR2 and TLR4. Ligand binding induces interaction with TLR4 and oligomerization of the complex. N-glycosylated.

The protein localises to the secreted. It is found in the extracellular space. Functionally, binds bacterial lipopolysaccharide (LPS). Cooperates with TLR4 in the innate immune response to bacterial lipopolysaccharide (LPS), and with TLR2 in the response to cell wall components from Gram-positive and Gram-negative bacteria. Enhances TLR4-dependent activation of NF-kappa-B. Cells expressing both LY96 and TLR4, but not TLR4 alone, respond to LPS. In Bos taurus (Bovine), this protein is Lymphocyte antigen 96 (LY96).